Consider the following 56-residue polypeptide: Large ribosomal subunit protein bL33 (56 aa).

Belongs to the bacterial ribosomal protein bL33 family.

The protein is Large ribosomal subunit protein bL33 (rpmG) of Treponema pallidum (strain Nichols).